The primary structure comprises 275 residues: MPIQKRKPTSAGRRFVVSVVNPDLHKGAPYAPLLEKKSKSGGRNNNGRITTRHIGGGHKQHYRKIDFKRNKDGIPAKVERLEYDPNRTAHIALVCYADGERRYIIAPKGLKAGDFIESGDASAIKVGNTLPLRNVPVGSVIHCIELKPGKGAQLARSAGASVQLVAREGQYATLRLRSGEMRKVEVECRATLGEVSNSEHSLRSLGKAGAKRWRGVRPTVRGVAMNPVDHPHGGGEGRTSGGRHPVSPWGTPTKGYKTRSNKRTDKMIVRRRNKK.

Disordered regions lie at residues leucine 34–lysine 59 and valine 223–lysine 275.

Belongs to the universal ribosomal protein uL2 family. As to quaternary structure, part of the 50S ribosomal subunit. Forms a bridge to the 30S subunit in the 70S ribosome.

One of the primary rRNA binding proteins. Required for association of the 30S and 50S subunits to form the 70S ribosome, for tRNA binding and peptide bond formation. It has been suggested to have peptidyltransferase activity; this is somewhat controversial. Makes several contacts with the 16S rRNA in the 70S ribosome. This chain is Large ribosomal subunit protein uL2, found in Teredinibacter turnerae (strain ATCC 39867 / T7901).